The following is a 195-amino-acid chain: Imidazoleglycerol-phosphate dehydratase (195 aa).

Belongs to the imidazoleglycerol-phosphate dehydratase family.

The protein resides in the cytoplasm. It carries out the reaction D-erythro-1-(imidazol-4-yl)glycerol 3-phosphate = 3-(imidazol-4-yl)-2-oxopropyl phosphate + H2O. It participates in amino-acid biosynthesis; L-histidine biosynthesis; L-histidine from 5-phospho-alpha-D-ribose 1-diphosphate: step 6/9. This Thermotoga maritima (strain ATCC 43589 / DSM 3109 / JCM 10099 / NBRC 100826 / MSB8) protein is Imidazoleglycerol-phosphate dehydratase.